Here is a 270-residue protein sequence, read N- to C-terminus: Putative pyruvate, phosphate dikinase regulatory protein (270 aa).

151 to 158 (GVSRTSKT) is a binding site for ADP.

Belongs to the pyruvate, phosphate/water dikinase regulatory protein family. PDRP subfamily.

It catalyses the reaction N(tele)-phospho-L-histidyl/L-threonyl-[pyruvate, phosphate dikinase] + ADP = N(tele)-phospho-L-histidyl/O-phospho-L-threonyl-[pyruvate, phosphate dikinase] + AMP + H(+). The enzyme catalyses N(tele)-phospho-L-histidyl/O-phospho-L-threonyl-[pyruvate, phosphate dikinase] + phosphate + H(+) = N(tele)-phospho-L-histidyl/L-threonyl-[pyruvate, phosphate dikinase] + diphosphate. Bifunctional serine/threonine kinase and phosphorylase involved in the regulation of the pyruvate, phosphate dikinase (PPDK) by catalyzing its phosphorylation/dephosphorylation. The protein is Putative pyruvate, phosphate dikinase regulatory protein of Lysinibacillus sphaericus (strain C3-41).